Here is a 281-residue protein sequence, read N- to C-terminus: Pantothenate synthetase (281 aa).

An ATP-binding site is contributed by 26 to 33; that stretch reads MGSLHEGH. Catalysis depends on H33, which acts as the Proton donor. Q57 is a (R)-pantoate binding site. Q57 is a binding site for beta-alanine. 144–147 is an ATP binding site; the sequence is GKKD. Q150 is a binding site for (R)-pantoate. ATP is bound by residues A173 and 181–184; that span reads LSSR.

This sequence belongs to the pantothenate synthetase family. As to quaternary structure, homodimer.

It is found in the cytoplasm. The enzyme catalyses (R)-pantoate + beta-alanine + ATP = (R)-pantothenate + AMP + diphosphate + H(+). It functions in the pathway cofactor biosynthesis; (R)-pantothenate biosynthesis; (R)-pantothenate from (R)-pantoate and beta-alanine: step 1/1. Its function is as follows. Catalyzes the condensation of pantoate with beta-alanine in an ATP-dependent reaction via a pantoyl-adenylate intermediate. The polypeptide is Pantothenate synthetase (Methylibium petroleiphilum (strain ATCC BAA-1232 / LMG 22953 / PM1)).